An 81-amino-acid chain; its full sequence is ATP synthase subunit c (81 aa).

The next 2 helical transmembrane spans lie at 7–27 (AASV…PGIG) and 57–77 (LAFM…LLFA).

Belongs to the ATPase C chain family. F-type ATPases have 2 components, F(1) - the catalytic core - and F(0) - the membrane proton channel. F(1) has five subunits: alpha(3), beta(3), gamma(1), delta(1), epsilon(1). F(0) has four main subunits: a(1), b(1), b'(1) and c(10-14). The alpha and beta chains form an alternating ring which encloses part of the gamma chain. F(1) is attached to F(0) by a central stalk formed by the gamma and epsilon chains, while a peripheral stalk is formed by the delta, b and b' chains.

The protein localises to the cellular thylakoid membrane. Functionally, f(1)F(0) ATP synthase produces ATP from ADP in the presence of a proton or sodium gradient. F-type ATPases consist of two structural domains, F(1) containing the extramembraneous catalytic core and F(0) containing the membrane proton channel, linked together by a central stalk and a peripheral stalk. During catalysis, ATP synthesis in the catalytic domain of F(1) is coupled via a rotary mechanism of the central stalk subunits to proton translocation. Its function is as follows. Key component of the F(0) channel; it plays a direct role in translocation across the membrane. A homomeric c-ring of between 10-14 subunits forms the central stalk rotor element with the F(1) delta and epsilon subunits. The protein is ATP synthase subunit c of Synechococcus sp. (strain CC9311).